Consider the following 589-residue polypeptide: Aspartate--tRNA ligase (589 aa).

Residue Glu-174 participates in L-aspartate binding. Residues 198–201 form an aspartate region; it reads QLFK. Arg-220 provides a ligand contact to L-aspartate. ATP is bound by residues 220 to 222 and Gln-229; that span reads RDE. His-448 lines the L-aspartate pocket. Glu-483 lines the ATP pocket. L-aspartate is bound at residue Arg-490. 535–538 serves as a coordination point for ATP; sequence GIDR.

Belongs to the class-II aminoacyl-tRNA synthetase family. Type 1 subfamily. As to quaternary structure, homodimer.

The protein localises to the cytoplasm. It carries out the reaction tRNA(Asp) + L-aspartate + ATP = L-aspartyl-tRNA(Asp) + AMP + diphosphate. In terms of biological role, catalyzes the attachment of L-aspartate to tRNA(Asp) in a two-step reaction: L-aspartate is first activated by ATP to form Asp-AMP and then transferred to the acceptor end of tRNA(Asp). This chain is Aspartate--tRNA ligase, found in Xylella fastidiosa (strain M23).